The chain runs to 366 residues: Sulfate/thiosulfate import ATP-binding protein CysA 2 (366 aa).

An ABC transporter domain is found at 14-243 (LSVHALCRRF…PASRFVAEFV (230 aa)). Residue 46–53 (GPSGCGKT) coordinates ATP.

Belongs to the ABC transporter superfamily. Sulfate/tungstate importer (TC 3.A.1.6) family. In terms of assembly, the complex is composed of two ATP-binding proteins (CysA), two transmembrane proteins (CysT and CysW) and a solute-binding protein (CysP).

Its subcellular location is the cell inner membrane. The catalysed reaction is sulfate(out) + ATP + H2O = sulfate(in) + ADP + phosphate + H(+). The enzyme catalyses thiosulfate(out) + ATP + H2O = thiosulfate(in) + ADP + phosphate + H(+). Part of the ABC transporter complex CysAWTP involved in sulfate/thiosulfate import. Responsible for energy coupling to the transport system. In Chromobacterium violaceum (strain ATCC 12472 / DSM 30191 / JCM 1249 / CCUG 213 / NBRC 12614 / NCIMB 9131 / NCTC 9757 / MK), this protein is Sulfate/thiosulfate import ATP-binding protein CysA 2.